An 891-amino-acid polypeptide reads, in one-letter code: Iron-regulated surface determinant protein H (891 aa).

The N-terminal stretch at 1 to 40 is a signal peptide; it reads MNKHHPKLRSFYSIRKSTLGVASVIVSTLFLITSQHQAQA. The disordered stretch occupies residues 42-77; it reads ENTNTSDKISENQNNNATTTQQPKDTNQTQPATQPV. Over residues 53–63 the composition is skewed to low complexity; that stretch reads NQNNNATTTQQ. The span at 64-77 shows a compositional bias: polar residues; it reads PKDTNQTQPATQPV. The NEAT 1 domain occupies 105–232; the sequence is DIGPREQVNF…IYNDPSLVKS (128 aa). The tract at residues 239–324 is disordered; sequence VTNDQSSSDA…NQSDVNQQYP (86 aa). Positions 240-276 are enriched in low complexity; the sequence is TNDQSSSDASNQTNTNTSNQNTSTTNNANNQPQATTN. The segment covering 277-323 has biased composition (polar residues); sequence MSQPAQPKSSANADQASSQPAHETNSNGNTNDKTNESSNQSDVNQQY. NEAT domains lie at 345-471 and 543-660; these read TADN…DYVD and QLTD…TKDD. Disordered stretches follow at residues 657 to 718, 752 to 777, and 835 to 864; these read TKDD…DADN, IAKD…KDSN, and TVKT…GETT. Composition is skewed to polar residues over residues 663–677 and 687–697; these read SQNN…QTGQ and AENSSTATNPK. Over residues 698–718 the composition is skewed to basic and acidic residues; the sequence is DASDKADVIEPESDVVKDADN. A compositionally biased stretch (basic and acidic residues) spans 835–850; the sequence is TVKTKEKAGTPSKENK. Residues 851 to 864 are compositionally biased toward polar residues; it reads LSQSKMLPKTGETT. An LPXTG sorting signal motif is present at residues 857-861; sequence LPKTG. Position 860 is a pentaglycyl murein peptidoglycan amidated threonine (Thr-860). The propeptide at 861–891 is removed by sortase; it reads GETTSSQSWWGLYALLGMLALFIPKFRKESK.

It belongs to the IsdH family.

The protein resides in the secreted. It is found in the cell wall. In terms of biological role, binds human plasma haptoglobin-hemoglobin complexes, haptoglobin and hemoglobin. Binds haptoglobin-hemoglobin complexes with significantly higher affinity than haptoglobin alone. This is Iron-regulated surface determinant protein H (isdH) from Staphylococcus aureus (strain N315).